The primary structure comprises 694 residues: Elongation factor G 2 (694 aa).

One can recognise a tr-type G domain in the interval 5–280 (SKYRNIGIFA…AVVDYLPSPT (276 aa)). GTP is bound by residues 14 to 21 (AHVDAGKT), 78 to 82 (DTPGH), and 132 to 135 (NKLD).

Belongs to the TRAFAC class translation factor GTPase superfamily. Classic translation factor GTPase family. EF-G/EF-2 subfamily.

It localises to the cytoplasm. Catalyzes the GTP-dependent ribosomal translocation step during translation elongation. During this step, the ribosome changes from the pre-translocational (PRE) to the post-translocational (POST) state as the newly formed A-site-bound peptidyl-tRNA and P-site-bound deacylated tRNA move to the P and E sites, respectively. Catalyzes the coordinated movement of the two tRNA molecules, the mRNA and conformational changes in the ribosome. The chain is Elongation factor G 2 from Pseudoalteromonas translucida (strain TAC 125).